Consider the following 459-residue polypeptide: Exodeoxyribonuclease 7 large subunit (459 aa).

The protein belongs to the XseA family. Heterooligomer composed of large and small subunits.

It localises to the cytoplasm. It carries out the reaction Exonucleolytic cleavage in either 5'- to 3'- or 3'- to 5'-direction to yield nucleoside 5'-phosphates.. Functionally, bidirectionally degrades single-stranded DNA into large acid-insoluble oligonucleotides, which are then degraded further into small acid-soluble oligonucleotides. The sequence is that of Exodeoxyribonuclease 7 large subunit from Yersinia pestis bv. Antiqua (strain Antiqua).